Consider the following 324-residue polypeptide: Phospho-N-acetylmuramoyl-pentapeptide-transferase (324 aa).

A run of 10 helical transmembrane segments spans residues 5–25 (GLLV…PLFI), 52–72 (PTMG…IMAI), 77–97 (LGAE…IGFL), 122–142 (VIAI…YIMI), 149–169 (FELG…GSNA), 176–196 (LDGL…IIAV), 201–221 (FGVA…LVFN), 227–247 (VFMG…VAIL), 253–273 (LLVI…IQVI), and 302–322 (VVVT…YIGV).

It belongs to the glycosyltransferase 4 family. MraY subfamily. Requires Mg(2+) as cofactor.

It localises to the cell membrane. The catalysed reaction is UDP-N-acetyl-alpha-D-muramoyl-L-alanyl-gamma-D-glutamyl-meso-2,6-diaminopimeloyl-D-alanyl-D-alanine + di-trans,octa-cis-undecaprenyl phosphate = di-trans,octa-cis-undecaprenyl diphospho-N-acetyl-alpha-D-muramoyl-L-alanyl-D-glutamyl-meso-2,6-diaminopimeloyl-D-alanyl-D-alanine + UMP. Its pathway is cell wall biogenesis; peptidoglycan biosynthesis. Catalyzes the initial step of the lipid cycle reactions in the biosynthesis of the cell wall peptidoglycan: transfers peptidoglycan precursor phospho-MurNAc-pentapeptide from UDP-MurNAc-pentapeptide onto the lipid carrier undecaprenyl phosphate, yielding undecaprenyl-pyrophosphoryl-MurNAc-pentapeptide, known as lipid I. In Bacillus anthracis, this protein is Phospho-N-acetylmuramoyl-pentapeptide-transferase.